A 338-amino-acid polypeptide reads, in one-letter code: tRNA N6-adenosine threonylcarbamoyltransferase (338 aa).

Positions 111 and 115 each coordinate Fe cation. Substrate is bound by residues 134–138 (LVSGG), aspartate 167, glycine 180, and asparagine 272. Position 300 (aspartate 300) interacts with Fe cation.

This sequence belongs to the KAE1 / TsaD family. Fe(2+) serves as cofactor.

It localises to the cytoplasm. It carries out the reaction L-threonylcarbamoyladenylate + adenosine(37) in tRNA = N(6)-L-threonylcarbamoyladenosine(37) in tRNA + AMP + H(+). Required for the formation of a threonylcarbamoyl group on adenosine at position 37 (t(6)A37) in tRNAs that read codons beginning with adenine. Is involved in the transfer of the threonylcarbamoyl moiety of threonylcarbamoyl-AMP (TC-AMP) to the N6 group of A37, together with TsaE and TsaB. TsaD likely plays a direct catalytic role in this reaction. The polypeptide is tRNA N6-adenosine threonylcarbamoyltransferase (Shewanella baltica (strain OS155 / ATCC BAA-1091)).